Consider the following 145-residue polypeptide: Photosystem I reaction center subunit XI (145 aa).

Transmembrane regions (helical) follow at residues 48 to 68, 75 to 95, and 125 to 145; these read LEIG…LGPL, LLVG…GLTI, and IGAF…SFFA.

This sequence belongs to the PsaL family.

Its subcellular location is the plastid. It is found in the chloroplast thylakoid membrane. The protein is Photosystem I reaction center subunit XI of Emiliania huxleyi (Coccolithophore).